The sequence spans 309 residues: Glutaminase (309 aa).

The substrate site is built by Ser-65, Asn-117, Glu-162, Asn-169, Tyr-193, Tyr-245, and Val-263.

The protein belongs to the glutaminase family. Homotetramer.

It catalyses the reaction L-glutamine + H2O = L-glutamate + NH4(+). The chain is Glutaminase from Bacillus mycoides (strain KBAB4) (Bacillus weihenstephanensis).